A 540-amino-acid polypeptide reads, in one-letter code: GMP synthase [glutamine-hydrolyzing] (540 aa).

The Glutamine amidotransferase type-1 domain occupies Lys29–Asp222. Cys106 (nucleophile) is an active-site residue. Residues His196 and Glu198 contribute to the active site. Residues Trp223 to Arg415 form the GMPS ATP-PPase domain. Ser250–Ala256 is a binding site for ATP.

As to quaternary structure, homodimer.

The enzyme catalyses XMP + L-glutamine + ATP + H2O = GMP + L-glutamate + AMP + diphosphate + 2 H(+). It functions in the pathway purine metabolism; GMP biosynthesis; GMP from XMP (L-Gln route): step 1/1. Catalyzes the synthesis of GMP from XMP. The protein is GMP synthase [glutamine-hydrolyzing] of Rhodopseudomonas palustris (strain ATCC BAA-98 / CGA009).